The following is a 165-amino-acid chain: Chorismate pyruvate-lyase (165 aa).

The substrate site is built by methionine 35, arginine 77, leucine 115, and glutamate 156.

The protein belongs to the UbiC family. As to quaternary structure, monomer.

The protein localises to the cytoplasm. It catalyses the reaction chorismate = 4-hydroxybenzoate + pyruvate. Its pathway is cofactor biosynthesis; ubiquinone biosynthesis. Functionally, removes the pyruvyl group from chorismate, with concomitant aromatization of the ring, to provide 4-hydroxybenzoate (4HB) for the ubiquinone pathway. The protein is Chorismate pyruvate-lyase of Enterobacter sp. (strain 638).